Reading from the N-terminus, the 183-residue chain is Ribonuclease H (183 aa).

Residues 2–151 (SQARFIAFSD…VDQLAQAAAR (150 aa)) enclose the RNase H type-1 domain. Mg(2+) contacts are provided by Asp-11, Glu-57, Asp-79, and Asp-143.

Belongs to the RNase H family. Monomer. Requires Mg(2+) as cofactor.

The protein resides in the cytoplasm. The catalysed reaction is Endonucleolytic cleavage to 5'-phosphomonoester.. In terms of biological role, endonuclease that specifically degrades the RNA of RNA-DNA hybrids. The polypeptide is Ribonuclease H (Anaeromyxobacter dehalogenans (strain 2CP-C)).